Consider the following 260-residue polypeptide: Malonyl-[acyl-carrier protein] O-methyltransferase (260 aa).

It belongs to the methyltransferase superfamily.

It catalyses the reaction malonyl-[ACP] + S-adenosyl-L-methionine = malonyl-[ACP] methyl ester + S-adenosyl-L-homocysteine. The protein operates within cofactor biosynthesis; biotin biosynthesis. Its function is as follows. Converts the free carboxyl group of a malonyl-thioester to its methyl ester by transfer of a methyl group from S-adenosyl-L-methionine (SAM). It allows to synthesize pimeloyl-ACP via the fatty acid synthetic pathway. The sequence is that of Malonyl-[acyl-carrier protein] O-methyltransferase from Chlorobium phaeovibrioides (strain DSM 265 / 1930) (Prosthecochloris vibrioformis (strain DSM 265)).